Consider the following 235-residue polypeptide: 5'-methylthioadenosine/S-adenosylhomocysteine nucleosidase (235 aa).

The active-site Proton acceptor is Glu12. Substrate-binding positions include Gly78, Met153, and 174 to 175; that span reads ME. The active-site Proton donor is Asp198.

It belongs to the PNP/UDP phosphorylase family. MtnN subfamily.

The catalysed reaction is S-adenosyl-L-homocysteine + H2O = S-(5-deoxy-D-ribos-5-yl)-L-homocysteine + adenine. It catalyses the reaction S-methyl-5'-thioadenosine + H2O = 5-(methylsulfanyl)-D-ribose + adenine. The enzyme catalyses 5'-deoxyadenosine + H2O = 5-deoxy-D-ribose + adenine. The protein operates within amino-acid biosynthesis; L-methionine biosynthesis via salvage pathway; S-methyl-5-thio-alpha-D-ribose 1-phosphate from S-methyl-5'-thioadenosine (hydrolase route): step 1/2. Catalyzes the irreversible cleavage of the glycosidic bond in both 5'-methylthioadenosine (MTA) and S-adenosylhomocysteine (SAH/AdoHcy) to adenine and the corresponding thioribose, 5'-methylthioribose and S-ribosylhomocysteine, respectively. Also cleaves 5'-deoxyadenosine, a toxic by-product of radical S-adenosylmethionine (SAM) enzymes, into 5-deoxyribose and adenine. The chain is 5'-methylthioadenosine/S-adenosylhomocysteine nucleosidase from Geobacillus kaustophilus (strain HTA426).